Reading from the N-terminus, the 722-residue chain is MGSSCFPQSPLSHSLFSSSSLSSSQFTPLLFSPRNAQKCKKKMPAMACIHSENQKESEFCSRRTILFVGFSVLPLLSLRANAFEGLSVDSQVKAQPQKEETEQTIQGNAENPFFSLLNGLGVFGSGVLGSLYALARNEKAVSDATIESMKNKLKEKEATFVSMEKKFQSELLNERDIRNNQLKRAGEERQALVNQLNSAKSTVTNLGQELQKEKRIAEELIVQIEGLQNNLMQMKEDKKKLQEELKEKLDLIQVLQEKITLLTTEIKDKEASLQSTTSKLAEKESEVDKLSSMYQESQDQLMNLTSEIKELKVEVQKRERELELKRESEDNLNVRLNSLLVERDESKKELDAIQKEYSEFKSISEKKVASDAKLLGEQEKRLHQLEEQLGTASDEVRKNNVLIADLTQEKENLRRMLDAELENISKLKLEVQVTQETLEKSRSDASDIAQQLQQSRHLCSKLEAEVSKLQMELEETRTSLRRNIDETKRGAELLAAELTTTRELLKKTNEEMHTMSHELAAVTENCDNLQTELVDVYKKAERAADELKQEKNIVVTLEKELTFLEAQITREKESRKNLEEELERATESLDEMNRNAFALAKELELANSHISSLEDEREVLQKSVSEQKQISQESRENLEDAHSLVMKLGKERESLEKRAKKLEDEMASAKGEILRLRTQVNSVKAPVNNEEKVEAGEKAAVTVKRTRRRKTATQPASQQESS.

The tract at residues 1–20 is disordered; it reads MGSSCFPQSPLSHSLFSSSS. A chloroplast-targeting transit peptide spans 1–50; that stretch reads MGSSCFPQSPLSHSLFSSSSLSSSQFTPLLFSPRNAQKCKKKMPAMACIH. The transit peptide at 51-84 directs the protein to the thylakoid; sequence SENQKESEFCSRRTILFVGFSVLPLLSLRANAFE. Residues 85-112 lie on the Lumenal, thylakoid side of the membrane; that stretch reads GLSVDSQVKAQPQKEETEQTIQGNAENP. Residues 113-133 form a helical membrane-spanning segment; sequence FFSLLNGLGVFGSGVLGSLYA. The Stromal segment spans residues 134–722; sequence LARNEKAVSD…TQPASQQESS (589 aa). Positions 146–679 form a coiled coil; that stretch reads IESMKNKLKE…KGEILRLRTQ (534 aa). The disordered stretch occupies residues 687–722; it reads VNNEEKVEAGEKAAVTVKRTRRRKTATQPASQQESS. The Nuclear localization signal signature appears at 705–712; sequence RTRRRKTA.

In terms of assembly, interacts with PTST2; the interaction is essential for the initiation of starch granules biosynthesis in leaf chloroplasts, for the correct location of the process in the stromal spaces between the thylakoid membranes, and for the association of PTST2 with the thylakoid membranes. In terms of processing, predicted to be translocated into the thylakoid by the Tat system.

Its subcellular location is the plastid. The protein resides in the chloroplast. It localises to the chloroplast thylakoid membrane. The protein localises to the chloroplast stroma. It is found in the chloroplast nucleoid. Its subcellular location is the nucleus. The protein resides in the nucleus matrix. Functionally, required for the initiation of starch granules biosynthesis in leaf chloroplasts. Anchored to the thylakoid membranes with its C-terminus facing into the stroma where it is essential for localizing PTST2 and SS4 to the stromal spaces between the thylakoid membranes in order to begin starch granule formation. Associated with leaf chloroplastic nucleoids in vivo. Binds to various chloroplastic double-stranded DNA fragments without particular sequence specificity in vitro. May function at the interface between nucleoids and thylakoids possibly by anchoring nucleoids to the thylakoid membrane system in mature chloroplasts. Likely to participate in nuclear architecture by connecting chromatin with the nuclear matrix and potentially with the nuclear envelope. In Nicotiana tabacum (Common tobacco), this protein is MAR-binding filament-like protein 1-1.